The primary structure comprises 143 residues: Large-conductance mechanosensitive channel (143 aa).

Helical transmembrane passes span 10–30 (FAVK…GAFS) and 89–109 (GSFI…FLMV).

Belongs to the MscL family. In terms of assembly, homopentamer.

Its subcellular location is the cell inner membrane. Channel that opens in response to stretch forces in the membrane lipid bilayer. May participate in the regulation of osmotic pressure changes within the cell. The sequence is that of Large-conductance mechanosensitive channel from Burkholderia pseudomallei (strain 668).